The primary structure comprises 454 residues: UPF0210 protein BL1209 (454 aa).

It belongs to the UPF0210 family. Homodimer.

This is UPF0210 protein BL1209 from Bifidobacterium longum (strain NCC 2705).